The sequence spans 173 residues: NADH-ubiquinone oxidoreductase chain 6 (173 aa).

The next 5 membrane-spanning stretches (helical) occupy residues 1–21, 27–47, 48–68, 87–107, and 139–159; these read MTYF…AVAS, YGVV…VSLG, VSFV…VVFV, VVGY…LGGL, and CGVG…FVVL.

This sequence belongs to the complex I subunit 6 family. Core subunit of respiratory chain NADH dehydrogenase (Complex I) which is composed of 45 different subunits.

The protein resides in the mitochondrion inner membrane. The catalysed reaction is a ubiquinone + NADH + 5 H(+)(in) = a ubiquinol + NAD(+) + 4 H(+)(out). In terms of biological role, core subunit of the mitochondrial membrane respiratory chain NADH dehydrogenase (Complex I) which catalyzes electron transfer from NADH through the respiratory chain, using ubiquinone as an electron acceptor. Essential for the catalytic activity and assembly of complex I. The sequence is that of NADH-ubiquinone oxidoreductase chain 6 (MT-ND6) from Gallus gallus (Chicken).